An 809-amino-acid polypeptide reads, in one-letter code: Ferric-pyoverdine BN7/BN8 receptor (809 aa).

The N-terminal stretch at 1–45 (MNHTARKRQGWQRSVSQKLAGAVVQGIACMGASAPLLLMPAWATA) is a signal peptide. Residues 166–273 (TPRETPQSLT…PSATINLIRK (108 aa)) form the TBDR plug domain. The 532-residue stretch at 278 to 809 (EAQASITGEA…NVMTSFKYSF (532 aa)) folds into the TBDR beta-barrel domain. The TonB C-terminal box motif lies at 792 to 809 (YGVYGTPRNVMTSFKYSF).

This sequence belongs to the TonB-dependent receptor family.

The protein resides in the cell outer membrane. Functionally, specific receptor for the siderophores ferric pyoverdines (pseudobactins) BN8 and BN7, iron chelating molecules that allow the organism to extract iron from the environment, especially under iron-restricted conditions. The protein is Ferric-pyoverdine BN7/BN8 receptor (pupB) of Pseudomonas putida (Arthrobacter siderocapsulatus).